Here is a 56-residue protein sequence, read N- to C-terminus: MAKADYNKRKPRKFGKGARRCIRCGQYGPIIRIHGLMLCRHCFREVAPKLGFRKYE.

The Zn(2+) site is built by Cys-21, Cys-24, Cys-39, and Cys-42.

Belongs to the universal ribosomal protein uS14 family. Zinc-binding uS14 subfamily. Part of the 30S ribosomal subunit. Zn(2+) serves as cofactor.

Functionally, binds 16S rRNA, required for the assembly of 30S particles. This is Small ribosomal subunit protein uS14 from Pyrococcus abyssi (strain GE5 / Orsay).